Reading from the N-terminus, the 933-residue chain is MKLKETLNLGKTAFPMRAGLPNKEPQWQAAWEQAELYKKRQELNAGKPAFHLHDGPPYANGNIHVGHALNKISKDIIVRSKSMSGFQAPYVPGWDTHGLPIEQVLAKQGIKRKEMDLAEYLEMCRQYALSQVDKQRDDFKRLGVSADWENPYVTLDPQFEADQIRVFGAMAEKGYIYRGAKPVYWSWSSESALAEAEIEYHDIDSTSLYYANKVKDGKGILDTNTYIVVWTTTPFTVTASRGLTVGPDMDYLVVKPAGSDRQYVVAEGLLDSLAGKFGWESFETLASHKGADLEYIVTEHPWDTDVEELVILGDHVTLESGTGIVHTAPGFGEDDYNVGTKYKLEVAVTVDERGLMTENAGPDFHGQFYNKVTPIVIDKLGDLLLAQEVINHSYPFDWRTKKPIIWRAVPQWFASVSDFRQDILDEIEKTTFHPSWGETRLYNMIRDRGDWVISRQRAWGVPLPIFYAEDGTAIMTKEVTDHVADLFQENGSIIWWQKEAKDLLPEGFTHPGSPNGEFTKETDIMDVWFDSGSSWNGVMNTKENLSYPADLYLEGSDQYRGWFNSSLITSVAVNGHAPYKAILSQGFVLDGKGEKMSKSKGNIISPNDVAKQYGADILRLWVASVDTDNDVRVSMEILGQVSETYRKIRNTLRFLIANTSDFNPATDTVAYADLGAVDKYMTIVFNQLVATITDAYERYDFMAIYKAVVNFVTVDLSAFYLDFAKDVVYIEAANSLERRRMQTVFYDILVKITKLLTPILPHTTEEIWSYLEHESEAFVQLAEMPVAETFSAQEDILEAWSAFMTLRTQAQKALEEARNAKIIGKSLEAHLTIYASEEVKTLLTALDSDIALLLIVSQLTIADLADAPADAVAFEGIAFMVEHAIGEVCERSRRIDPTTRMRSYNAFVCDHSAKIIEENFPEAVAEGFEESDK.

Residues proline 57–histidine 67 carry the 'HIGH' region motif. Glutamate 554 serves as a coordination point for L-isoleucyl-5'-AMP. Positions lysine 595–serine 599 match the 'KMSKS' region motif. Lysine 598 is an ATP binding site.

It belongs to the class-I aminoacyl-tRNA synthetase family. IleS type 1 subfamily. In terms of assembly, monomer.

It is found in the cytoplasm. The catalysed reaction is tRNA(Ile) + L-isoleucine + ATP = L-isoleucyl-tRNA(Ile) + AMP + diphosphate. In terms of biological role, catalyzes the attachment of isoleucine to tRNA(Ile). As IleRS can inadvertently accommodate and process structurally similar amino acids such as valine, to avoid such errors it has two additional distinct tRNA(Ile)-dependent editing activities. One activity is designated as 'pretransfer' editing and involves the hydrolysis of activated Val-AMP. The other activity is designated 'posttransfer' editing and involves deacylation of mischarged Val-tRNA(Ile). This is Isoleucine--tRNA ligase from Streptococcus pyogenes serotype M28 (strain MGAS6180).